Reading from the N-terminus, the 212-residue chain is Uridine kinase (212 aa).

Residue 13–20 (GASASGKS) participates in ATP binding.

This sequence belongs to the uridine kinase family.

Its subcellular location is the cytoplasm. The catalysed reaction is uridine + ATP = UMP + ADP + H(+). It carries out the reaction cytidine + ATP = CMP + ADP + H(+). The protein operates within pyrimidine metabolism; CTP biosynthesis via salvage pathway; CTP from cytidine: step 1/3. Its pathway is pyrimidine metabolism; UMP biosynthesis via salvage pathway; UMP from uridine: step 1/1. The chain is Uridine kinase from Shewanella baltica (strain OS155 / ATCC BAA-1091).